A 254-amino-acid chain; its full sequence is 4-hydroxy-tetrahydrodipicolinate reductase (254 aa).

NAD(+) is bound by residues 8–13, 87–89, and 111–114; these read GASGKM, GTT, and ATNM. Residue His-143 is the Proton donor/acceptor of the active site. His-144 serves as a coordination point for (S)-2,3,4,5-tetrahydrodipicolinate. Lys-147 (proton donor) is an active-site residue. 153-154 is a binding site for (S)-2,3,4,5-tetrahydrodipicolinate; the sequence is GT.

This sequence belongs to the DapB family.

The protein localises to the cytoplasm. It catalyses the reaction (S)-2,3,4,5-tetrahydrodipicolinate + NAD(+) + H2O = (2S,4S)-4-hydroxy-2,3,4,5-tetrahydrodipicolinate + NADH + H(+). The enzyme catalyses (S)-2,3,4,5-tetrahydrodipicolinate + NADP(+) + H2O = (2S,4S)-4-hydroxy-2,3,4,5-tetrahydrodipicolinate + NADPH + H(+). It functions in the pathway amino-acid biosynthesis; L-lysine biosynthesis via DAP pathway; (S)-tetrahydrodipicolinate from L-aspartate: step 4/4. Its function is as follows. Catalyzes the conversion of 4-hydroxy-tetrahydrodipicolinate (HTPA) to tetrahydrodipicolinate. The polypeptide is 4-hydroxy-tetrahydrodipicolinate reductase (Campylobacter curvus (strain 525.92)).